We begin with the raw amino-acid sequence, 205 residues long: Deoxyuridine 5'-triphosphate nucleotidohydrolase (205 aa).

Serine 54 is subject to Phosphoserine. Substrate-binding positions include 126 to 128, 140 to 143, glycine 151, and 199 to 200; these read RSG, GVID, and FG.

This sequence belongs to the dUTPase family. In terms of assembly, homotrimer. Mg(2+) is required as a cofactor. As to expression, expressed in all tissues examined. Higher levels in heart and kidney.

It localises to the cytoplasm. The protein localises to the nucleus. It carries out the reaction dUTP + H2O = dUMP + diphosphate + H(+). Its pathway is pyrimidine metabolism; dUMP biosynthesis; dUMP from dCTP (dUTP route): step 2/2. Its function is as follows. Catalyzes the cleavage of 2'-deoxyuridine 5'-triphosphate (dUTP) into 2'-deoxyuridine 5'-monophosphate (dUMP) and inorganic pyrophosphate and through its action efficiently prevents uracil misincorporation into DNA and at the same time provides dUMP, the substrate for de novo thymidylate biosynthesis. Inhibits peroxisome proliferator-activated receptor (PPAR) activity by binding of its N-terminal to PPAR, preventing the latter's dimerization with retinoid X receptor. Essential for embryonic development. The sequence is that of Deoxyuridine 5'-triphosphate nucleotidohydrolase (Dut) from Rattus norvegicus (Rat).